The chain runs to 299 residues: MRLVLVAGPTASGKTALAVALAQRLGGEIVNADSQQVYRGLDVGTAKPTAEERAAAPHHLLDLVEPGEGMDAARFAALADAAIADIAARGRVPIVAGGTGLYVRALLHGVVEAPGRDPELRRALEAEAARDGRPALHARLAAVDPAAAARIRPNDLVRVVRALEIAAGGRTPSELYQAHAFREDRYDAALLALDPPRAELHARIDARVRAMFAGGLLEEARALAARFGGALPARLPIGYAEAAAHLRGELDLEEAIRRVQVAHRRYARRQVIWLRKERGVVWIAPPYDPEALARRVEKR.

8-15 (GPTASGKT) serves as a coordination point for ATP. 10–15 (TASGKT) lines the substrate pocket. Residues 33 to 36 (DSQQ) are interaction with substrate tRNA.

It belongs to the IPP transferase family. As to quaternary structure, monomer. It depends on Mg(2+) as a cofactor.

The enzyme catalyses adenosine(37) in tRNA + dimethylallyl diphosphate = N(6)-dimethylallyladenosine(37) in tRNA + diphosphate. Its function is as follows. Catalyzes the transfer of a dimethylallyl group onto the adenine at position 37 in tRNAs that read codons beginning with uridine, leading to the formation of N6-(dimethylallyl)adenosine (i(6)A). The protein is tRNA dimethylallyltransferase of Anaeromyxobacter dehalogenans (strain 2CP-C).